Here is a 255-residue protein sequence, read N- to C-terminus: MANHKNLFFLCFLIGLGLCSARRALLSSSESEAEVAAYGVNSGLSAGLGVGIGGGPGGGSGYGGGSGEGGGAGGHGEGHIGGGGGGGHGGGAGGGGGGGPGGGYGGGSGEGGGAGYGGGEAGGHGGGGGGGAGGGGGGGGGAHGGGYGGGQGAGAGGGYGGGGAGGHGGGGGGGNGGGGGGGSGEGGAHGGGYGAGGGAGEGYGGGAGAGGHGGGGGGGGGSGGGGGGGGGYAAASGYGHGGGAGGGEGSGGYVP.

A signal peptide spans 1-21 (MANHKNLFFLCFLIGLGLCSA). The tract at residues 63–88 (GGGSGEGGGAGGHGEGHIGGGGGGGH) is disordered.

In terms of tissue distribution, expressed in emerging leaf primordia and young leaves.

It is found in the secreted. In terms of biological role, involved in leaf vasculature patterning. The polypeptide is Glycine-rich protein DOT1 (Arabidopsis thaliana (Mouse-ear cress)).